Reading from the N-terminus, the 65-residue chain is uncharacterized protein (65 aa).

The protein localises to the plastid. Its subcellular location is the chloroplast. This is an uncharacterized protein from Guillardia theta (Cryptophyte).